A 339-amino-acid polypeptide reads, in one-letter code: Probable cytosolic iron-sulfur protein assembly protein CIAO1 (339 aa).

WD repeat units lie at residues 14–53 (HPDS…WICK), 59–98 (GHQR…FECV), 103–142 (GHEN…EYEC), 148–187 (SHTQ…WVCC), 192–231 (GHES…NEQG), 250–289 (FHSR…DPQQ), and 301–339 (AHSQ…SEGI). The LYR motif; required for interaction with HSC20 motif lies at 176–178 (LYR).

This sequence belongs to the WD repeat CIA1 family. In terms of assembly, component of the CIA complex. Interacts with CIAO2A and forms a complex with CIAO2B and MMS19; the interactions with CIAO2A and CIAO2B are mutually exclusive. Interacts with CHD1L, ERCC2, IREB2 and POLD1. Component of the MMXD complex, which includes CIAO1, ERCC2, CIAO2B, MMS19 and SLC25A5. Interacts with WT1. Interacts with CIAO3. Interacts (via LYR motif) with HSC20.

It is found in the cytoplasm. Key component of the cytosolic iron-sulfur protein assembly (CIA) complex, a multiprotein complex that mediates the incorporation of iron-sulfur cluster into extramitochondrial Fe/S proteins. As a CIA complex component, interacts specifically with CIAO2A or CIAO2B and MMS19 to assist different branches of iron-sulfur protein assembly, depending of its interactors. The complex CIAO1:CIAO2B:MMS19 binds to and facilitates the assembly of most cytosolic-nuclear Fe/S proteins. CIAO1:CIAO2A specifically matures ACO1 and stabilizes IREB2. Seems to specifically modulate the transactivation activity of WT1. As part of the mitotic spindle-associated MMXD complex it may play a role in chromosome segregation. The sequence is that of Probable cytosolic iron-sulfur protein assembly protein CIAO1 from Bos taurus (Bovine).